The following is a 1771-amino-acid chain: Fatty acid synthase alpha subunit pkiB (1771 aa).

Over residues 108 to 130 the composition is skewed to polar residues; the sequence is SQPTQPQFEPTSPSHLTKRSPSP. Residues 108–133 are disordered; that stretch reads SQPTQPQFEPTSPSHLTKRSPSPSKA. One can recognise a Carrier domain in the interval 143 to 221; sequence ELTLQAGHVI…ESFQPEFSGI (79 aa). Position 181 is an O-(pantetheine 4'-phosphoryl)serine (S181). Positions 575 to 771 are beta-ketoacyl reductase; it reads HKAVLVTGAG…CGAVIGWTRG (197 aa). One can recognise a Ketosynthase family 3 (KS3) domain in the interval 1011-1531; sequence KELLHEVAVE…QKGAINIMVS (521 aa). Residues C1197, H1416, and H1457 each act as for beta-ketoacyl synthase activity in the active site. Residues D1650, V1651, and E1652 each coordinate Mg(2+). Acetyl-CoA is bound by residues 1650–1652, Y1676, S1686, 1695–1705, 1719–1722, and 1753–1755; these read DVE, EAAFKSLQTTS, EVGG, and ISH. Positions 1754 and 1755 each coordinate Mg(2+).

This sequence belongs to the thiolase-like superfamily. Fungal fatty acid synthetase subunit alpha family. [Alpha(6)beta(6)] hexamers of two multifunctional subunits (alpha and beta).

It carries out the reaction acetyl-CoA + n malonyl-CoA + 2n NADPH + 4n H(+) = a long-chain-acyl-CoA + n CoA + n CO2 + 2n NADP(+).. It catalyses the reaction a fatty acyl-[ACP] + malonyl-[ACP] + H(+) = a 3-oxoacyl-[ACP] + holo-[ACP] + CO2. The catalysed reaction is a (3R)-hydroxyacyl-[ACP] + NADP(+) = a 3-oxoacyl-[ACP] + NADPH + H(+). Its pathway is secondary metabolite biosynthesis. In terms of biological role, fatty acid synthase alpha subunit; part of the pki gene cluster that mediates the biosynthesis of 2,4-dihydroxy-3-methyl-6-(2-oxoundecyl)benzaldehyde. The first step in the pathway is the generation of the decanoyl starter unit by the FAS composed of subunits pkiB and pkiC, which is then transferred directly from the FAS to the SAT domain of the non-reducing polyketide synthase pkiA. PkiA condenses the decanoyyl starter unit with 4 malonyl-CoA units and performs one methylation step to yield 2,4-dihydroxy-3-methyl-6-(2-oxoundecyl)benzaldehyde. The chain is Fatty acid synthase alpha subunit pkiB from Emericella nidulans (strain FGSC A4 / ATCC 38163 / CBS 112.46 / NRRL 194 / M139) (Aspergillus nidulans).